Here is a 157-residue protein sequence, read N- to C-terminus: uncharacterized protein (157 aa).

Residues 36 to 63 (QIEELNELCQFFNISLTYTRESLEELEN) are a coiled coil.

This is an uncharacterized protein from Bacillus subtilis (strain 168).